The following is a 188-amino-acid chain: Pyridoxal 5'-phosphate synthase subunit PdxT (188 aa).

Residue 47–49 (GES) participates in L-glutamine binding. Catalysis depends on Cys-79, which acts as the Nucleophile. Residues Arg-105 and 134–135 (IR) contribute to the L-glutamine site. Residues His-170 and Glu-172 each act as charge relay system in the active site.

It belongs to the glutaminase PdxT/SNO family. As to quaternary structure, in the presence of PdxS, forms a dodecamer of heterodimers. Only shows activity in the heterodimer.

It catalyses the reaction aldehydo-D-ribose 5-phosphate + D-glyceraldehyde 3-phosphate + L-glutamine = pyridoxal 5'-phosphate + L-glutamate + phosphate + 3 H2O + H(+). It carries out the reaction L-glutamine + H2O = L-glutamate + NH4(+). Its pathway is cofactor biosynthesis; pyridoxal 5'-phosphate biosynthesis. In terms of biological role, catalyzes the hydrolysis of glutamine to glutamate and ammonia as part of the biosynthesis of pyridoxal 5'-phosphate. The resulting ammonia molecule is channeled to the active site of PdxS. The polypeptide is Pyridoxal 5'-phosphate synthase subunit PdxT (Listeria welshimeri serovar 6b (strain ATCC 35897 / DSM 20650 / CCUG 15529 / CIP 8149 / NCTC 11857 / SLCC 5334 / V8)).